The following is a 92-amino-acid chain: Small ribosomal subunit protein uS19 (92 aa).

This sequence belongs to the universal ribosomal protein uS19 family.

Protein S19 forms a complex with S13 that binds strongly to the 16S ribosomal RNA. The chain is Small ribosomal subunit protein uS19 from Prochlorococcus marinus (strain MIT 9301).